A 440-amino-acid chain; its full sequence is FAD-dependent monooxygenase afoD (440 aa).

Residues 10 to 30 (PLSIAIIGGGIIGLMTALGLL) form a helical membrane-spanning segment. Positions 41, 145, and 320 each coordinate FAD. The N-linked (GlcNAc...) asparagine glycan is linked to Asn352.

It belongs to the paxM FAD-dependent monooxygenase family. FAD is required as a cofactor.

The protein resides in the membrane. FAD-dependent monooxygenase; part of the gene cluster that mediates the biosynthesis of asperfuranone, a probable antitumor agent. The polyketide synthase afoG is responsible for producing the 3,5-dimethyloctadienone moiety from acetyl-CoA, three malonyl-CoA, and two S-adenosyl methionines (SAM). The 3,5-dimethyloctadienone moiety is then loaded onto the SAT domain of afoE and extended with four malonyl-CoA and one SAM, which leads to the formation of 2,4-dihydroxy-6-(5,7-dimethyl-2-oxo-trans-3-trans-5-nonadienyl)-3-methylbenzaldehyde (compound 2) after reductive release and aldol condensation. AfoD is the next enzyme in the biosynthesis sequence and hydroxylates the side chain at the benzylic position of compound 2. After benzylic hydroxylation, a furan ring is formed after five-member ring hemiacetal formation and water elimination. AfoF and afoC are proposed to oxidize the R-diketone proton and to reduce the unconjugated carbonyl group, respectively, to generate asperfuranone. Since no intermediates could be isolated from afoF and afoC deletants, the sequence of these two enzymes is not fully understood. Moreover, since afoC deletant still produces a small amount of asperfuranone, other endogenous oxidoreductases might catalyze the same reaction with much less efficiency. This Emericella nidulans (strain FGSC A4 / ATCC 38163 / CBS 112.46 / NRRL 194 / M139) (Aspergillus nidulans) protein is FAD-dependent monooxygenase afoD.